The sequence spans 252 residues: uncharacterized protein (252 aa).

An ATP-binding site is contributed by 28–35 (GCDGTGKS).

It to E.coli YghS and YghT.

This is an uncharacterized protein from Escherichia coli O6:H1 (strain CFT073 / ATCC 700928 / UPEC).